Reading from the N-terminus, the 1695-residue chain is Helicase swr1 (1695 aa).

Polar residues predominate over residues 1-10; it reads MQDGSLNGLS. The interval 1–229 is disordered; the sequence is MQDGSLNGLS…SHSNVTSTPT (229 aa). A compositionally biased stretch (basic and acidic residues) spans 11 to 25; it reads HHNDERVNHENEDKS. 2 stretches are compositionally biased toward polar residues: residues 126–137 and 145–156; these read AQRSTVNKNLSG and SPLSMSVSQSGI. Low complexity predominate over residues 187–207; it reads RSPPRQTPSRTRSQSSATSAP. The HSA domain occupies 334 to 408; sequence PEQQEEPPQQ…EEVRVKRKQL (75 aa). 2 disordered regions span residues 467 to 738 and 772 to 821; these read SDFL…ASAP and LRQN…LKTP. Acidic residues predominate over residues 499 to 514; that stretch reads SETEDEDEVDDDEGLT. Residues 538–554 are compositionally biased toward polar residues; that stretch reads ASDTSESSDGTRTSHIL. Acidic residues predominate over residues 572–616; that stretch reads IELDEVDPMLLDDSEDESTDMDDDMGDSDEDGDADGTDSDDESDD. Basic and acidic residues predominate over residues 626–638; that stretch reads SKDRVLNDAHRFD. Acidic residues predominate over residues 656–678; the sequence is FDDDGQSVSVDEDGDEELEDADE. Polar residues predominate over residues 685-697; that stretch reads GPSNSVSISQSTA. A compositionally biased stretch (acidic residues) spans 705–718; the sequence is TPDEEPDEQAEVVD. The region spanning 842–1007 is the Helicase ATP-binding domain; that stretch reads AGLYNNHING…WSLLFFLMPS (166 aa). An ATP-binding site is contributed by 855–862; that stretch reads DEMGLGKT. A DEAH box motif is present at residues 958 to 961; it reads DEAH. Residues 1382 to 1532 enclose the Helicase C-terminal domain; sequence RLDKLLRDLK…DVVIQEGEFT (151 aa). 2 disordered regions span residues 1590–1625 and 1669–1695; these read AQKEMEQADNDDFGDRSISHTPGQVGTPLATGPQEG and EPLVLPPDKTKKKSKKGKEHRLSKRRR. Over residues 1678–1695 the composition is skewed to basic residues; it reads TKKKSKKGKEHRLSKRRR.

This sequence belongs to the SNF2/RAD54 helicase family. SWR1 subfamily. In terms of assembly, component of the SWR1 chromatin-remodeling complex.

The protein resides in the nucleus. It catalyses the reaction ATP + H2O = ADP + phosphate + H(+). Catalytic component of the SWR1 complex which mediates the ATP-dependent exchange of histone H2A for the H2A variant HZT1 leading to transcriptional regulation of selected genes by chromatin remodeling. The chain is Helicase swr1 (swr1) from Aspergillus fumigatus (strain ATCC MYA-4609 / CBS 101355 / FGSC A1100 / Af293) (Neosartorya fumigata).